The sequence spans 568 residues: Proline--tRNA ligase (568 aa).

It belongs to the class-II aminoacyl-tRNA synthetase family. ProS type 1 subfamily. As to quaternary structure, homodimer.

The protein resides in the cytoplasm. The catalysed reaction is tRNA(Pro) + L-proline + ATP = L-prolyl-tRNA(Pro) + AMP + diphosphate. In terms of biological role, catalyzes the attachment of proline to tRNA(Pro) in a two-step reaction: proline is first activated by ATP to form Pro-AMP and then transferred to the acceptor end of tRNA(Pro). As ProRS can inadvertently accommodate and process non-cognate amino acids such as alanine and cysteine, to avoid such errors it has two additional distinct editing activities against alanine. One activity is designated as 'pretransfer' editing and involves the tRNA(Pro)-independent hydrolysis of activated Ala-AMP. The other activity is designated 'posttransfer' editing and involves deacylation of mischarged Ala-tRNA(Pro). The misacylated Cys-tRNA(Pro) is not edited by ProRS. This chain is Proline--tRNA ligase, found in Lysinibacillus sphaericus (strain C3-41).